A 128-amino-acid chain; its full sequence is Saitohin (128 aa).

Polar residues predominate over residues 77–87; it reads SYSSEENSRNG. The disordered stretch occupies residues 77-128; that stretch reads SYSSEENSRNGAEQGRQLSIEGPFQGQNCPSHPAAALPLPMRGESQATSCQV.

As to quaternary structure, interacts with PRDX6.

It is found in the cytoplasm. Its subcellular location is the nucleus. The protein is Saitohin (STH) of Pan troglodytes (Chimpanzee).